The sequence spans 540 residues: Isocitrate lyase (540 aa).

103–105 is a binding site for substrate; the sequence is SGW. Asp-187 is a Mg(2+) binding site. The active-site Proton acceptor is Cys-225. Residues 226 to 227, 385 to 389, and Thr-458 contribute to the substrate site; these read GH and NNSPS.

This sequence belongs to the isocitrate lyase/PEP mutase superfamily. Isocitrate lyase family. In terms of assembly, homotetramer. Requires Mg(2+) as cofactor.

The catalysed reaction is D-threo-isocitrate = glyoxylate + succinate. The protein operates within carbohydrate metabolism; glyoxylate cycle; (S)-malate from isocitrate: step 1/2. Its pathway is one-carbon metabolism; formaldehyde assimilation via serine pathway. With respect to regulation, in the presence of magnesium, inhibited by oxalate, potassium cyanide, manganese, silver, cadmium and to a lesser extent by succinate, glycolate, iodoacetamide, DL-penicillamine, aluminum, sodium, potassium, lithium and strontium. Involved in the metabolic adaptation in response to environmental changes. Catalyzes the reversible formation of succinate and glyoxylate from isocitrate, a key step of the glyoxylate cycle, which operates as an anaplerotic route for replenishing the tricarboxylic acid cycle during growth on fatty acid substrates. May be involved in the assimilation of one-carbon compounds via the isocitrate lyase-positive serine pathway. This is Isocitrate lyase from Hyphomicrobium methylovorum.